The following is a 309-amino-acid chain: Homoserine O-succinyltransferase (309 aa).

Cysteine 142 acts as the Acyl-thioester intermediate in catalysis. The substrate site is built by lysine 163 and serine 192. Histidine 235 acts as the Proton acceptor in catalysis. Glutamate 237 is a catalytic residue. Arginine 249 contacts substrate.

Belongs to the MetA family. As to quaternary structure, homodimer.

It localises to the cytoplasm. It carries out the reaction L-homoserine + succinyl-CoA = O-succinyl-L-homoserine + CoA. The protein operates within amino-acid biosynthesis; L-methionine biosynthesis via de novo pathway; O-succinyl-L-homoserine from L-homoserine: step 1/1. In terms of biological role, transfers a succinyl group from succinyl-CoA to L-homoserine, forming succinyl-L-homoserine. This is Homoserine O-succinyltransferase from Escherichia coli (strain ATCC 8739 / DSM 1576 / NBRC 3972 / NCIMB 8545 / WDCM 00012 / Crooks).